The chain runs to 293 residues: ATP synthase gamma chain (293 aa).

Belongs to the ATPase gamma chain family. In terms of assembly, F-type ATPases have 2 components, CF(1) - the catalytic core - and CF(0) - the membrane proton channel. CF(1) has five subunits: alpha(3), beta(3), gamma(1), delta(1), epsilon(1). CF(0) has three main subunits: a, b and c.

Its subcellular location is the cell membrane. Produces ATP from ADP in the presence of a proton gradient across the membrane. The gamma chain is believed to be important in regulating ATPase activity and the flow of protons through the CF(0) complex. The polypeptide is ATP synthase gamma chain (Streptococcus sanguinis).